Consider the following 757-residue polypeptide: Subtilisin-like protease SBT1.7 (757 aa).

The first 24 residues, 1–24 (MSSSFLSSTAFFLLLCLGFCHVSS), serve as a signal peptide directing secretion. A propeptide spanning residues 25-106 (SSSDQGTYIV…VLPEHRYELH (82 aa)) is cleaved from the precursor. In terms of domain architecture, Inhibitor I9 spans 31 to 106 (TYIVHMAKSQ…VLPEHRYELH (76 aa)). One can recognise a Peptidase S8 domain in the interval 102–610 (RYELHTTRTP…AGHVSPTTAT (509 aa)). Asp139 functions as the Charge relay system in the catalytic mechanism. A glycan (N-linked (GlcNAc...) asparagine) is linked at Asn170. A disordered region spans residues 196–219 (PIDESKESRSPRDDDGHGTHTSST). A compositionally biased stretch (basic and acidic residues) spans 198–213 (DESKESRSPRDDDGHG). His212 functions as the Charge relay system in the catalytic mechanism. Residues Asn352, Asn376, and Asn379 are each glycosylated (N-linked (GlcNAc...) asparagine). Ser542 serves as the catalytic Charge relay system. N-linked (GlcNAc...) asparagine glycosylation is found at Asn631 and Asn644.

Belongs to the peptidase S8 family. As to expression, expressed in immature siliques and at lower levels in stems and flowers. Widely expressed at low levels.

It localises to the secreted. The protein localises to the cell wall. Activated by calcium. Inhibited by the serine protease inhibitors 4-(2-aminoethyl)benzenesulphonyl fluoride (AEBSF), PMSF, di-isopropyl phosphofluoridate (DFP) and soybean trypsin inhibitor (SBTI). Not inhibited by benzamidine or iodoacetamide. Leupeptin and pepstatin A have a minor inhibitory action. Functionally, serine protease. Has a substrate preference for the hydrophobic residues Phe and Ala and the basic residue Asp in the P1 position, and for Asp, Leu or Ala in the P1' position. Essential for mucilage release from seed coats. Triggers the accumulation and/or activation of cell wall modifying enzymes necessary either for the loosening of the outer primary cell wall, or to facilitate swelling of the mucilage. This chain is Subtilisin-like protease SBT1.7, found in Arabidopsis thaliana (Mouse-ear cress).